Reading from the N-terminus, the 156-residue chain is SsrA-binding protein (156 aa).

Over residues Lys-135–Arg-150 the composition is skewed to basic and acidic residues. A disordered region spans residues Lys-135–Thr-156.

The protein belongs to the SmpB family.

Its subcellular location is the cytoplasm. Functionally, required for rescue of stalled ribosomes mediated by trans-translation. Binds to transfer-messenger RNA (tmRNA), required for stable association of tmRNA with ribosomes. tmRNA and SmpB together mimic tRNA shape, replacing the anticodon stem-loop with SmpB. tmRNA is encoded by the ssrA gene; the 2 termini fold to resemble tRNA(Ala) and it encodes a 'tag peptide', a short internal open reading frame. During trans-translation Ala-aminoacylated tmRNA acts like a tRNA, entering the A-site of stalled ribosomes, displacing the stalled mRNA. The ribosome then switches to translate the ORF on the tmRNA; the nascent peptide is terminated with the 'tag peptide' encoded by the tmRNA and targeted for degradation. The ribosome is freed to recommence translation, which seems to be the essential function of trans-translation. This chain is SsrA-binding protein, found in Legionella pneumophila (strain Corby).